The primary structure comprises 171 residues: NADH-quinone oxidoreductase subunit I 1 (171 aa).

2 4Fe-4S ferredoxin-type domains span residues 39-71 and 81-110; these read IVLT…LTKA and EHFR…LTPD. Positions 51, 54, 57, 61, 90, 93, 96, and 100 each coordinate [4Fe-4S] cluster.

The protein belongs to the complex I 23 kDa subunit family. In terms of assembly, NDH-1 is composed of 14 different subunits. Subunits NuoA, H, J, K, L, M, N constitute the membrane sector of the complex. [4Fe-4S] cluster is required as a cofactor.

Its subcellular location is the cell inner membrane. It catalyses the reaction a quinone + NADH + 5 H(+)(in) = a quinol + NAD(+) + 4 H(+)(out). NDH-1 shuttles electrons from NADH, via FMN and iron-sulfur (Fe-S) centers, to quinones in the respiratory chain. The immediate electron acceptor for the enzyme in this species is believed to be ubiquinone. Couples the redox reaction to proton translocation (for every two electrons transferred, four hydrogen ions are translocated across the cytoplasmic membrane), and thus conserves the redox energy in a proton gradient. This Rhodopseudomonas palustris (strain BisB5) protein is NADH-quinone oxidoreductase subunit I 1.